We begin with the raw amino-acid sequence, 182 residues long: MALSREEVAARYGTALFGYAQDNKVLDTVYDEMMALKKAAIANPKFISVLSDPILSSKDKKSILTAVEKDFSDEVQGFLNLLLEYNRFADLIDIIDQFSLLYDNENKIASGTATTAVKLDDDQLERLSESFAKKYDLNAVRLENKVDPSILGGVILQVKDRVIDGSVKNKLKKIRAQIIDEN.

It belongs to the ATPase delta chain family. F-type ATPases have 2 components, F(1) - the catalytic core - and F(0) - the membrane proton channel. F(1) has five subunits: alpha(3), beta(3), gamma(1), delta(1), epsilon(1). F(0) has three main subunits: a(1), b(2) and c(10-14). The alpha and beta chains form an alternating ring which encloses part of the gamma chain. F(1) is attached to F(0) by a central stalk formed by the gamma and epsilon chains, while a peripheral stalk is formed by the delta and b chains.

Its subcellular location is the cell membrane. Its activity is regulated as follows. Increases 2-fold following exposure to low pH. F(1)F(0) ATP synthase produces ATP from ADP in the presence of a proton or sodium gradient. F-type ATPases consist of two structural domains, F(1) containing the extramembraneous catalytic core and F(0) containing the membrane proton channel, linked together by a central stalk and a peripheral stalk. During catalysis, ATP synthesis in the catalytic domain of F(1) is coupled via a rotary mechanism of the central stalk subunits to proton translocation. In terms of biological role, this protein is part of the stalk that links CF(0) to CF(1). It either transmits conformational changes from CF(0) to CF(1) or is implicated in proton conduction. The chain is ATP synthase subunit delta from Lactobacillus acidophilus (strain ATCC 700396 / NCK56 / N2 / NCFM).